A 237-amino-acid polypeptide reads, in one-letter code: UPF0688 protein C1orf174 homolog (237 aa).

Positions 1 to 187 (MRSRKLAGGV…LLDDDSNQPM (187 aa)) are disordered. The span at 11 to 28 (RSSARLRARSCSAASASA) shows a compositional bias: low complexity. Residues 29-47 (QDTHVTTSAQTACQTPSSH) show a composition bias toward polar residues. The span at 48 to 76 (KATDRRTSKKFKYDKGHIVKSELQKHRSD) shows a compositional bias: basic and acidic residues. Ser-183 is subject to Phosphoserine.

It belongs to the UPF0688 family.

The protein localises to the nucleus. The protein is UPF0688 protein C1orf174 homolog of Bos taurus (Bovine).